A 146-amino-acid chain; its full sequence is Horcolin (146 aa).

The interval 1 to 21 (MSKPVKIGPWGGNGGSERDVQ) is disordered. Residues 4–146 (PVKIGPWGGN…LDAIGFYITP (143 aa)) form the Jacalin-type lectin domain.

Belongs to the jacalin lectin family.

The protein resides in the secreted. The protein localises to the extracellular space. It localises to the apoplast. Functionally, mannose-specific lectin. Has a weak agglutinating activity against rabbit erythrocytes. This chain is Horcolin, found in Hordeum vulgare (Barley).